The sequence spans 248 residues: Putative glutamine amidotransferase-like protein C13C5.04 (248 aa).

The Glutamine amidotransferase type-1 domain maps to 13-217 (PMVEITSAYG…VKVLRGTEVF (205 aa)).

The polypeptide is Putative glutamine amidotransferase-like protein C13C5.04 (Schizosaccharomyces pombe (strain 972 / ATCC 24843) (Fission yeast)).